Reading from the N-terminus, the 276-residue chain is Large ribosomal subunit protein uL2 (276 aa).

2 disordered regions span residues 38–59 (FQKS…GGHK) and 225–276 (VMNP…RHKR). The span at 39–49 (QKSGRNNNGHI) shows a compositional bias: polar residues. Over residues 50–59 (TTRHKGGGHK) the composition is skewed to basic residues.

This sequence belongs to the universal ribosomal protein uL2 family. Part of the 50S ribosomal subunit. Forms a bridge to the 30S subunit in the 70S ribosome.

Its function is as follows. One of the primary rRNA binding proteins. Required for association of the 30S and 50S subunits to form the 70S ribosome, for tRNA binding and peptide bond formation. It has been suggested to have peptidyltransferase activity; this is somewhat controversial. Makes several contacts with the 16S rRNA in the 70S ribosome. In Cupriavidus necator (strain ATCC 17699 / DSM 428 / KCTC 22496 / NCIMB 10442 / H16 / Stanier 337) (Ralstonia eutropha), this protein is Large ribosomal subunit protein uL2.